Here is a 425-residue protein sequence, read N- to C-terminus: Enolase (425 aa).

Residue Q163 participates in (2R)-2-phosphoglycerate binding. E205 serves as the catalytic Proton donor. Residues D242, E285, and D312 each contribute to the Mg(2+) site. Residues K337, R366, S367, and K388 each contribute to the (2R)-2-phosphoglycerate site. K337 serves as the catalytic Proton acceptor.

This sequence belongs to the enolase family. The cofactor is Mg(2+).

It localises to the cytoplasm. It is found in the secreted. Its subcellular location is the cell surface. It catalyses the reaction (2R)-2-phosphoglycerate = phosphoenolpyruvate + H2O. Its pathway is carbohydrate degradation; glycolysis; pyruvate from D-glyceraldehyde 3-phosphate: step 4/5. Its function is as follows. Catalyzes the reversible conversion of 2-phosphoglycerate (2-PG) into phosphoenolpyruvate (PEP). It is essential for the degradation of carbohydrates via glycolysis. The polypeptide is Enolase (Cereibacter sphaeroides (strain ATCC 17029 / ATH 2.4.9) (Rhodobacter sphaeroides)).